The sequence spans 560 residues: Dihydroxy-acid dehydratase (560 aa).

D78 lines the Mg(2+) pocket. C119 serves as a coordination point for [2Fe-2S] cluster. D120 and K121 together coordinate Mg(2+). K121 is modified (N6-carboxylysine). Residue C192 coordinates [2Fe-2S] cluster. Residue E446 coordinates Mg(2+). The active-site Proton acceptor is S472.

This sequence belongs to the IlvD/Edd family. Homodimer. It depends on [2Fe-2S] cluster as a cofactor. Mg(2+) is required as a cofactor.

It catalyses the reaction (2R)-2,3-dihydroxy-3-methylbutanoate = 3-methyl-2-oxobutanoate + H2O. It carries out the reaction (2R,3R)-2,3-dihydroxy-3-methylpentanoate = (S)-3-methyl-2-oxopentanoate + H2O. It functions in the pathway amino-acid biosynthesis; L-isoleucine biosynthesis; L-isoleucine from 2-oxobutanoate: step 3/4. Its pathway is amino-acid biosynthesis; L-valine biosynthesis; L-valine from pyruvate: step 3/4. Its function is as follows. Functions in the biosynthesis of branched-chain amino acids. Catalyzes the dehydration of (2R,3R)-2,3-dihydroxy-3-methylpentanoate (2,3-dihydroxy-3-methylvalerate) into 2-oxo-3-methylpentanoate (2-oxo-3-methylvalerate) and of (2R)-2,3-dihydroxy-3-methylbutanoate (2,3-dihydroxyisovalerate) into 2-oxo-3-methylbutanoate (2-oxoisovalerate), the penultimate precursor to L-isoleucine and L-valine, respectively. The sequence is that of Dihydroxy-acid dehydratase from Anaeromyxobacter sp. (strain K).